We begin with the raw amino-acid sequence, 178 residues long: ATP-dependent protease subunit HslV (178 aa).

The active site involves Thr2. Na(+) contacts are provided by Gly157, Cys160, and Thr163.

It belongs to the peptidase T1B family. HslV subfamily. A double ring-shaped homohexamer of HslV is capped on each side by a ring-shaped HslU homohexamer. The assembly of the HslU/HslV complex is dependent on binding of ATP.

The protein localises to the cytoplasm. It carries out the reaction ATP-dependent cleavage of peptide bonds with broad specificity.. Its activity is regulated as follows. Allosterically activated by HslU binding. Its function is as follows. Protease subunit of a proteasome-like degradation complex believed to be a general protein degrading machinery. In Hamiltonella defensa subsp. Acyrthosiphon pisum (strain 5AT), this protein is ATP-dependent protease subunit HslV.